The sequence spans 2188 residues: Genome polyprotein (2188 aa).

The N-myristoyl glycine; by host moiety is linked to residue Gly-2. The Cytoplasmic segment spans residues 2–1503 (GAQVTRQQTG…HISRAFITLQ (1502 aa)). 8 residues coordinate N-acetylneuraminate: Asp-408, Arg-412, Pro-548, Asp-549, Ile-550, Arg-834, Pro-838, and Asn-839. Active-site for protease 2A activity residues include His-879 and Asp-897. Zn(2+) is bound by residues Cys-914 and Cys-916. Cys-968 serves as the catalytic For protease 2A activity. Cys-974 and His-976 together coordinate Zn(2+). The membrane-binding stretch occupies residues 1108–1180 (SESWLKKFTE…EHSCPTTERQ (73 aa)). The interval 1108–1246 (SESWLKKFTE…SPGTGKSVAS (139 aa)) is oligomerization. Positions 1129–1133 (SQKID) are RNA-binding. The SF3 helicase domain maps to 1212–1370 (EKKINNYIQF…YKDSNKLDMS (159 aa)). 1236-1243 (GSPGTGKS) contributes to the ATP binding site. Residues Cys-1376, Cys-1389, and Cys-1394 each coordinate Zn(2+). Residues 1376 to 1394 (CKPDNCTPTNYKRCCPLIC) form a C4-type; degenerate zinc finger. The RNA-binding stretch occupies residues 1421 to 1428 (EYRTRNST). The oligomerization stretch occupies residues 1432–1437 (LEALFQ). Residues 1504–1519 (AIATFVSIAGVVYVIY) lie within the membrane without spanning it. Residues 1520 to 2188 (KLFAGIQGPY…SLRRKWLDSF (669 aa)) are Cytoplasmic-facing. Position 1529 is an O-(5'-phospho-RNA)-tyrosine (Tyr-1529). The Peptidase C3 domain occupies 1549-1727 (GPGFDFAQAI…FAAMLLHSYF (179 aa)). Active-site for protease 3C activity residues include His-1588, Glu-1619, and Cys-1695. The RdRp catalytic domain occupies 1954–2069 (GEIFAFDYTG…SYPHKIDPGL (116 aa)). Mg(2+) is bound by residues Asp-1960 and Asp-2055.

This sequence belongs to the picornaviruses polyprotein family. In terms of assembly, interacts with capsid protein VP1 and capsid protein VP3 to form heterotrimeric protomers. As to quaternary structure, interacts with capsid protein VP0, and capsid protein VP3 to form heterotrimeric protomers. Five protomers subsequently associate to form pentamers which serve as building blocks for the capsid. Interacts with capsid protein VP2, capsid protein VP3 and capsid protein VP4 following cleavage of capsid protein VP0. Interacts with capsid protein VP1 and capsid protein VP3 in the mature capsid. In terms of assembly, interacts with capsid protein VP0 and capsid protein VP1 to form heterotrimeric protomers. Five protomers subsequently associate to form pentamers which serve as building blocks for the capsid. Interacts with capsid protein VP4 in the mature capsid. Interacts with protein 2C; this interaction may be important for virion morphogenesis. Interacts with host IRF7. As to quaternary structure, interacts with capsid protein VP1 and capsid protein VP3. Homodimer. In terms of assembly, homohexamer; forms a hexameric ring structure with 6-fold symmetry characteristic of AAA+ ATPases. Interacts (via N-terminus) with host RTN3 (via reticulon domain); this interaction is important for viral replication. Interacts with capsid protein VP3; this interaction may be important for virion morphogenesis. As to quaternary structure, interacts with protein 3CD. Homodimer. Interacts with host GBF1. Interacts (via GOLD domain) with host ACBD3 (via GOLD domain); this interaction allows the formation of a viral protein 3A/ACBD3 heterotetramer with a 2:2 stoichiometry, which will stimulate the recruitment of host PI4KB in order to synthesize PI4P at the viral RNA replication sites. In terms of assembly, interacts with RNA-directed RNA polymerase. As to quaternary structure, interacts with host IFIH1/MDA5; this interaction inhibits host IFIH1. Interacts with protein 3AB and with RNA-directed RNA polymerase. In terms of assembly, interacts with Viral protein genome-linked and with protein 3CD. The cofactor is Mg(2+). Post-translationally, specific enzymatic cleavages in vivo by the viral proteases yield processing intermediates and the mature proteins. In terms of processing, myristoylation is required for the formation of pentamers during virus assembly. Further assembly of 12 pentamers and a molecule of genomic RNA generates the provirion. During virion maturation, immature virions are rendered infectious following cleavage of VP0 into VP4 and VP2. This maturation seems to be an autocatalytic event triggered by the presence of RNA in the capsid and it is followed by a conformational change infectious virion. Post-translationally, myristoylation is required during RNA encapsidation and formation of the mature virus particle. In terms of processing, VPg is uridylylated by the polymerase into VPg-pUpU. This acts as a nucleotide-peptide primer for the genomic RNA replication.

The protein localises to the virion. It localises to the host cytoplasm. It is found in the host cytoplasmic vesicle membrane. Its subcellular location is the host nucleus. The catalysed reaction is a ribonucleoside 5'-triphosphate + H2O = a ribonucleoside 5'-diphosphate + phosphate + H(+). It catalyses the reaction Selective cleavage of Tyr-|-Gly bond in the picornavirus polyprotein.. The enzyme catalyses RNA(n) + a ribonucleoside 5'-triphosphate = RNA(n+1) + diphosphate. It carries out the reaction Selective cleavage of Gln-|-Gly bond in the poliovirus polyprotein. In other picornavirus reactions Glu may be substituted for Gln, and Ser or Thr for Gly.. Functionally, component of immature procapsids, which is cleaved into capsid proteins VP4 and VP2 after maturation. Allows the capsid to remain inactive before the maturation step. In terms of biological role, forms an icosahedral capsid of pseudo T=3 symmetry with capsid proteins VP2 and VP3. The capsid is 300 Angstroms in diameter, composed of 60 copies of each capsid protein and enclosing the viral positive strand RNA genome. Capsid protein VP1 mainly forms the vertices of the capsid. Capsid protein VP1, together with VP3, interacts with host cell sialic acids to provide virion attachment to target host cells. This attachment induces virion internalization. After binding to its receptor, the capsid undergoes conformational changes. Capsid protein VP1 N-terminus (that contains an amphipathic alpha-helix) and capsid protein VP4 are externalized. Together, they shape a pore in the host membrane through which viral genome is translocated to host cell cytoplasm. Its function is as follows. Forms an icosahedral capsid of pseudo T=3 symmetry with capsid proteins VP2 and VP3. The capsid is 300 Angstroms in diameter, composed of 60 copies of each capsid protein and enclosing the viral positive strand RNA genome. Forms an icosahedral capsid of pseudo T=3 symmetry with capsid proteins VP2 and VP3. The capsid is 300 Angstroms in diameter, composed of 60 copies of each capsid protein and enclosing the viral positive strand RNA genome. Capsid protein VP3, together with VP1, interacts with host cell sialic acids to provide virion attachment to target host cells. In addition, inhibits the phosphorylation and nuclear translocation of host IRF7 and thereby suppresses downstream interferon production. Functionally, lies on the inner surface of the capsid shell. After binding to the host receptor, the capsid undergoes conformational changes. Capsid protein VP4 is released, Capsid protein VP1 N-terminus is externalized, and together, they shape a pore in the host membrane through which the viral genome is translocated into the host cell cytoplasm. In terms of biological role, cysteine protease that cleaves viral polyprotein and specific host proteins. It is responsible for the autocatalytic cleavage between the P1 and P2 regions, which is the first cleavage occurring in the polyprotein. Also cleaves the host translation initiation factor EIF4G1, in order to shut down the capped cellular mRNA translation. Inhibits the host nucleus-cytoplasm protein and RNA trafficking by cleaving host members of the nuclear pores. Counteracts stress granule formation probably by antagonizing its assembly or promoting its dissassembly. Also plays a role in the suppression of host innate immunity through cleavage of host TRAF3, a component of the signaling cascade required to produce type I interferons. Its function is as follows. Plays an essential role in the virus replication cycle by acting as a viroporin. Creates a pore in the host endoplasmic reticulum and as a consequence releases Ca2+ in the cytoplasm of infected cell. In turn, high levels of cytoplasmic calcium may trigger membrane trafficking and transport of viral ER-associated proteins to viroplasms, sites of viral genome replication. Induces and associates with structural rearrangements of intracellular membranes. Displays RNA-binding, nucleotide binding and NTPase activities. May play a role in virion morphogenesis and viral RNA encapsidation by interacting with the capsid protein VP3. Functionally, localizes the viral replication complex to the surface of membranous vesicles. Together with protein 3CD binds the Cis-Active RNA Element (CRE) which is involved in RNA synthesis initiation. Acts as a cofactor to stimulate the activity of 3D polymerase, maybe through a nucleid acid chaperone activity. In terms of biological role, localizes the viral replication complex to the surface of membranous vesicles. It inhibits host cell endoplasmic reticulum-to-Golgi apparatus transport and causes the disassembly of the Golgi complex, possibly through GBF1 interaction. This would result in depletion of MHC, trail receptors and IFN receptors at the host cell surface. Plays an essential role in viral RNA replication by recruiting ACBD3 and PI4KB at the viral replication sites, thereby allowing the formation of the rearranged membranous structures where viral replication takes place. Its function is as follows. Acts as a primer for viral RNA replication and remains covalently bound to viral genomic RNA. VPg is uridylylated prior to priming replication into VPg-pUpU. The oriI viral genomic sequence may act as a template for this. The VPg-pUpU is then used as primer on the genomic RNA poly(A) by the RNA-dependent RNA polymerase to replicate the viral genome. During genome replication, the VPg-RNA linkage is removed by the host TDP2, thereby accelerating replication. During the late stage of the replication cycle, host TDP2 is excluded from sites of viral RNA synthesis and encapsidation, allowing for the generation of progeny virions. Involved in the viral replication complex and viral polypeptide maturation. It exhibits protease activity with a specificity and catalytic efficiency that is different from protease 3C. Protein 3CD lacks polymerase activity. Protein 3CD binds to the 5'UTR of the viral genome. Functionally, major viral protease that mediates proteolytic processing of the polyprotein. Cleaves host EIF5B, contributing to host translation shutoff. Also cleaves host PABPC1, contributing to host translation shutoff. Binds and inhibits host IFIH1/MDA5, thereby inhibiting the type-I IFN production and the establishment of the antiviral state. Cleaves host MAP3K7/TAK1, resulting in inhibition of TRAF6-triggered NF-kappa-B induction. Cleaves host TICAM1; this interaction allows the virus to disrupt host TLR3 signaling. Cleaves host IRF7, resulting in inhibition of type-I IFN production. Cleaves host NLRP1, triggers host N-glycine-mediated degradation of the autoinhibitory NLRP1 N-terminal fragment. In terms of biological role, replicates the viral genomic RNA on the surface of intracellular membranes. May form linear arrays of subunits that propagate along a strong head-to-tail interaction called interface-I. Covalently attaches UMP to a tyrosine of VPg, which is used to prime RNA synthesis. The positive stranded RNA genome is first replicated at virus induced membranous vesicles, creating a dsRNA genomic replication form. This dsRNA is then used as template to synthesize positive stranded RNA genomes. ss(+)RNA genomes are either translated, replicated or encapsidated. The protein is Genome polyprotein of Human enterovirus D68 (EV68).